The primary structure comprises 199 residues: MTTFTKPLSKLIGHFEKFPGIGPRTAQRLALFILKQSESSIRDFSKALLEAHSNVGHCKKCFNLTSEEECDICRNAERNQNIICVVAETKDLLALERAREFKGVYHVIGGLISPMDSIGPEILEIRSLVERVSKSEIDEIILALTPSVEGDTTSLYIGKLLTPFTKVTRIAYGLPMGSELEYVDEVTLARALEGRTNLI.

The C4-type zinc-finger motif lies at C58–C73. The Toprim domain occupies N81 to P175.

The protein belongs to the RecR family.

Its function is as follows. May play a role in DNA repair. It seems to be involved in an RecBC-independent recombinational process of DNA repair. It may act with RecF and RecO. The polypeptide is Recombination protein RecR (Prochlorococcus marinus (strain MIT 9515)).